The sequence spans 540 residues: Glucose-6-phosphate isomerase (540 aa).

Glu-350 (proton donor) is an active-site residue. Residues His-381 and Lys-503 contribute to the active site.

It belongs to the GPI family.

The protein resides in the cytoplasm. The enzyme catalyses alpha-D-glucose 6-phosphate = beta-D-fructose 6-phosphate. Its pathway is carbohydrate biosynthesis; gluconeogenesis. It participates in carbohydrate degradation; glycolysis; D-glyceraldehyde 3-phosphate and glycerone phosphate from D-glucose: step 2/4. In terms of biological role, catalyzes the reversible isomerization of glucose-6-phosphate to fructose-6-phosphate. The sequence is that of Glucose-6-phosphate isomerase from Burkholderia ambifaria (strain MC40-6).